The following is a 323-amino-acid chain: Acetyl-coenzyme A carboxylase carboxyl transferase subunit alpha (323 aa).

The CoA carboxyltransferase C-terminal domain occupies 39 to 293 (RLAGKSQQLT…KRSLAESLRQ (255 aa)).

The protein belongs to the AccA family. As to quaternary structure, acetyl-CoA carboxylase is a heterohexamer composed of biotin carboxyl carrier protein (AccB), biotin carboxylase (AccC) and two subunits each of ACCase subunit alpha (AccA) and ACCase subunit beta (AccD).

Its subcellular location is the cytoplasm. The catalysed reaction is N(6)-carboxybiotinyl-L-lysyl-[protein] + acetyl-CoA = N(6)-biotinyl-L-lysyl-[protein] + malonyl-CoA. Its pathway is lipid metabolism; malonyl-CoA biosynthesis; malonyl-CoA from acetyl-CoA: step 1/1. Functionally, component of the acetyl coenzyme A carboxylase (ACC) complex. First, biotin carboxylase catalyzes the carboxylation of biotin on its carrier protein (BCCP) and then the CO(2) group is transferred by the carboxyltransferase to acetyl-CoA to form malonyl-CoA. The chain is Acetyl-coenzyme A carboxylase carboxyl transferase subunit alpha from Cupriavidus metallidurans (strain ATCC 43123 / DSM 2839 / NBRC 102507 / CH34) (Ralstonia metallidurans).